The sequence spans 219 residues: Thiopurine S-methyltransferase (219 aa).

4 residues coordinate S-adenosyl-L-methionine: W10, L45, E66, and R130.

The protein belongs to the class I-like SAM-binding methyltransferase superfamily. TPMT family.

Its subcellular location is the cytoplasm. It carries out the reaction S-adenosyl-L-methionine + a thiopurine = S-adenosyl-L-homocysteine + a thiopurine S-methylether.. The protein is Thiopurine S-methyltransferase of Psychrobacter cryohalolentis (strain ATCC BAA-1226 / DSM 17306 / VKM B-2378 / K5).